We begin with the raw amino-acid sequence, 282 residues long: Ubiquinone biosynthesis protein COQ4 homolog, mitochondrial (282 aa).

A mitochondrion-targeting transit peptide spans 1–30 (MFVRKSCYSLINATRRCLRYRQLSSTTAGT). Zn(2+) is bound by residues His-186, Asp-187, His-190, and Glu-202.

This sequence belongs to the COQ4 family. In terms of assembly, component of a multi-subunit COQ enzyme complex. The cofactor is Zn(2+).

It localises to the mitochondrion inner membrane. It carries out the reaction a 4-hydroxy-3-methoxy-5-(all-trans-polyprenyl)benzoate + H(+) = a 2-methoxy-6-(all-trans-polyprenyl)phenol + CO2. Its pathway is cofactor biosynthesis; ubiquinone biosynthesis. Functionally, lyase that catalyzes the C1-decarboxylation of 4-hydroxy-3-methoxy-5-(all-trans-polyprenyl)benzoic acid into 2-methoxy-6-(all-trans-polyprenyl)phenol during ubiquinone biosynthesis. This Anopheles gambiae (African malaria mosquito) protein is Ubiquinone biosynthesis protein COQ4 homolog, mitochondrial.